The sequence spans 213 residues: Ribosomal RNA large subunit methyltransferase E (213 aa).

The S-adenosyl-L-methionine site is built by G68, W70, D88, D104, and D127. K167 serves as the catalytic Proton acceptor.

The protein belongs to the class I-like SAM-binding methyltransferase superfamily. RNA methyltransferase RlmE family.

The protein localises to the cytoplasm. It carries out the reaction uridine(2552) in 23S rRNA + S-adenosyl-L-methionine = 2'-O-methyluridine(2552) in 23S rRNA + S-adenosyl-L-homocysteine + H(+). Specifically methylates the uridine in position 2552 of 23S rRNA at the 2'-O position of the ribose in the fully assembled 50S ribosomal subunit. This Neorickettsia sennetsu (strain ATCC VR-367 / Miyayama) (Ehrlichia sennetsu) protein is Ribosomal RNA large subunit methyltransferase E.